The chain runs to 361 residues: Phospho-N-acetylmuramoyl-pentapeptide-transferase (361 aa).

Transmembrane regions (helical) follow at residues 25–45 (RAVM…PWVI), 73–93 (TMGG…WADL), 97–117 (YVWL…YDDW), 132–152 (FKMA…IATA), 167–187 (TVAY…VIVG), 200–220 (GLAA…AYVA), 240–260 (VVVF…FNAY), 264–284 (VFMG…VAVI), 289–309 (IVLF…MIQV), and 338–358 (QVVV…LSTL).

The protein belongs to the glycosyltransferase 4 family. MraY subfamily. The cofactor is Mg(2+).

The protein localises to the cell inner membrane. The catalysed reaction is UDP-N-acetyl-alpha-D-muramoyl-L-alanyl-gamma-D-glutamyl-meso-2,6-diaminopimeloyl-D-alanyl-D-alanine + di-trans,octa-cis-undecaprenyl phosphate = di-trans,octa-cis-undecaprenyl diphospho-N-acetyl-alpha-D-muramoyl-L-alanyl-D-glutamyl-meso-2,6-diaminopimeloyl-D-alanyl-D-alanine + UMP. It participates in cell wall biogenesis; peptidoglycan biosynthesis. Its function is as follows. Catalyzes the initial step of the lipid cycle reactions in the biosynthesis of the cell wall peptidoglycan: transfers peptidoglycan precursor phospho-MurNAc-pentapeptide from UDP-MurNAc-pentapeptide onto the lipid carrier undecaprenyl phosphate, yielding undecaprenyl-pyrophosphoryl-MurNAc-pentapeptide, known as lipid I. This is Phospho-N-acetylmuramoyl-pentapeptide-transferase from Chromobacterium violaceum (strain ATCC 12472 / DSM 30191 / JCM 1249 / CCUG 213 / NBRC 12614 / NCIMB 9131 / NCTC 9757 / MK).